Here is a 189-residue protein sequence, read N- to C-terminus: Protein jagunal homolog (189 aa).

Residues 1-34 are Cytoplasmic-facing; sequence MSSRGVRAAGTDGNDFQNRQRIAQHYQESAQYKS. A helical membrane pass occupies residues 35-55; it reads VLKWFFVPHFLILVFMWLKVG. Topologically, residues 56–75 are lumenal; it reads SEFLRYNFGWKNAFFERLDM. A helical transmembrane segment spans residues 76–96; the sequence is PAAYPWEYVWCLSFIPIVLAL. Residues 97-105 are Cytoplasmic-facing; the sequence is SSFQRNKLK. The chain crosses the membrane as a helical span at residues 106–126; it reads VLHYAYYAEFICGIFPCMIGL. Residues 127-150 lie on the Lumenal side of the membrane; it reads GGQLPELLEYANDMEGSNTPTFKG. The helical transmembrane segment at 151 to 171 threads the bilayer; that stretch reads IFPMVIIWYIFFAVALQIHGF. The Cytoplasmic segment spans residues 172 to 189; the sequence is SMYFMHHLAAAWAPVKRD.

The protein belongs to the jagunal family.

It localises to the endoplasmic reticulum membrane. The protein is Protein jagunal homolog of Caenorhabditis briggsae.